A 454-amino-acid polypeptide reads, in one-letter code: UDP-N-acetylmuramoylalanine--D-glutamate ligase (454 aa).

An ATP-binding site is contributed by 115-121; it reads GTNGKTT.

This sequence belongs to the MurCDEF family.

It localises to the cytoplasm. It carries out the reaction UDP-N-acetyl-alpha-D-muramoyl-L-alanine + D-glutamate + ATP = UDP-N-acetyl-alpha-D-muramoyl-L-alanyl-D-glutamate + ADP + phosphate + H(+). Its pathway is cell wall biogenesis; peptidoglycan biosynthesis. Its function is as follows. Cell wall formation. Catalyzes the addition of glutamate to the nucleotide precursor UDP-N-acetylmuramoyl-L-alanine (UMA). This Thermoanaerobacter pseudethanolicus (strain ATCC 33223 / 39E) (Clostridium thermohydrosulfuricum) protein is UDP-N-acetylmuramoylalanine--D-glutamate ligase.